Consider the following 146-residue polypeptide: Snaclec coagulation factor IX/factor X-binding protein subunit B2 (146 aa).

The first 23 residues, 1 to 23 (MGRLIFVSFGLLVVFLSLSGTAA), serve as a signal peptide directing secretion. 3 disulfide bridges follow: cysteine 25–cysteine 36, cysteine 53–cysteine 142, and cysteine 119–cysteine 134. Positions 32–143 (YEGHCYKPFN…CRMMANFVCE (112 aa)) constitute a C-type lectin domain.

The protein belongs to the snaclec family. Heterodimer of subunits A and B2; disulfide-linked. Expressed by the venom gland.

It is found in the secreted. Its function is as follows. Anticoagulant protein which binds to the gamma-carboxyglutamic acid-domain regions of factors IX (F9) and factor X (F10) in the presence of calcium with a 1 to 1 stoichiometry. This is Snaclec coagulation factor IX/factor X-binding protein subunit B2 from Trimeresurus stejnegeri (Chinese green tree viper).